The following is a 396-amino-acid chain: Digeranylgeranylglycerophospholipid reductase (396 aa).

Residues Gly-14, Glu-33, Cys-44, Gly-45, Gly-47, Arg-100, Ala-124, Glu-162, Asp-283, Gly-295, and Ile-296 each coordinate FAD. 2 residues coordinate a 2,3-bis-O-(geranylgeranyl)-sn-glycerol 1-phospholipid: Lys-338 and Val-374.

This sequence belongs to the geranylgeranyl reductase family. DGGGPL reductase subfamily. It depends on FAD as a cofactor.

It catalyses the reaction 2,3-bis-O-(phytanyl)-sn-glycerol 1-phosphate + 8 NADP(+) = 2,3-bis-O-(geranylgeranyl)-sn-glycerol 1-phosphate + 8 NADPH + 8 H(+). The enzyme catalyses 2,3-bis-O-(phytanyl)-sn-glycerol 1-phosphate + 8 NAD(+) = 2,3-bis-O-(geranylgeranyl)-sn-glycerol 1-phosphate + 8 NADH + 8 H(+). It carries out the reaction a 2,3-bis-O-phytanyl-sn-glycerol 1-phospholipid + 8 A = a 2,3-bis-O-(geranylgeranyl)-sn-glycerol 1-phospholipid + 8 AH2. The catalysed reaction is CDP-2,3-bis-O-(geranylgeranyl)-sn-glycerol + 8 AH2 = CDP-2,3-bis-O-(phytanyl)-sn-glycerol + 8 A. It catalyses the reaction archaetidylserine + 8 AH2 = 2,3-bis-O-phytanyl-sn-glycero-3-phospho-L-serine + 8 A. The protein operates within membrane lipid metabolism; glycerophospholipid metabolism. Its function is as follows. Is involved in the reduction of 2,3-digeranylgeranylglycerophospholipids (unsaturated archaeols) into 2,3-diphytanylglycerophospholipids (saturated archaeols) in the biosynthesis of archaeal membrane lipids. Catalyzes the formation of archaetidic acid (2,3-di-O-phytanyl-sn-glyceryl phosphate) from 2,3-di-O-geranylgeranylglyceryl phosphate (DGGGP) via the hydrogenation of each double bond of the isoprenoid chains. Is also probably able to reduce double bonds of geranyl groups in CDP-2,3-bis-O-(geranylgeranyl)-sn-glycerol and archaetidylserine, thus acting at various stages in the biosynthesis of archaeal membrane lipids. The sequence is that of Digeranylgeranylglycerophospholipid reductase from Thermoplasma volcanium (strain ATCC 51530 / DSM 4299 / JCM 9571 / NBRC 15438 / GSS1).